A 418-amino-acid polypeptide reads, in one-letter code: UDP-N-acetylglucosamine 1-carboxyvinyltransferase (418 aa).

A phosphoenolpyruvate-binding site is contributed by 22-23; it reads KN. Arg-93 provides a ligand contact to UDP-N-acetyl-alpha-D-glucosamine. Residue Cys-117 is the Proton donor of the active site. Cys-117 bears the 2-(S-cysteinyl)pyruvic acid O-phosphothioketal mark. UDP-N-acetyl-alpha-D-glucosamine is bound by residues Asp-305 and Val-327.

This sequence belongs to the EPSP synthase family. MurA subfamily.

Its subcellular location is the cytoplasm. It carries out the reaction phosphoenolpyruvate + UDP-N-acetyl-alpha-D-glucosamine = UDP-N-acetyl-3-O-(1-carboxyvinyl)-alpha-D-glucosamine + phosphate. It functions in the pathway cell wall biogenesis; peptidoglycan biosynthesis. Cell wall formation. Adds enolpyruvyl to UDP-N-acetylglucosamine. This chain is UDP-N-acetylglucosamine 1-carboxyvinyltransferase, found in Alkalilimnicola ehrlichii (strain ATCC BAA-1101 / DSM 17681 / MLHE-1).